The primary structure comprises 258 residues: Ubiquinone/menaquinone biosynthesis C-methyltransferase UbiE (258 aa).

Residues Thr-81, Asp-102, and 130 to 131 (NA) contribute to the S-adenosyl-L-methionine site.

Belongs to the class I-like SAM-binding methyltransferase superfamily. MenG/UbiE family.

The enzyme catalyses a 2-demethylmenaquinol + S-adenosyl-L-methionine = a menaquinol + S-adenosyl-L-homocysteine + H(+). The catalysed reaction is a 2-methoxy-6-(all-trans-polyprenyl)benzene-1,4-diol + S-adenosyl-L-methionine = a 5-methoxy-2-methyl-3-(all-trans-polyprenyl)benzene-1,4-diol + S-adenosyl-L-homocysteine + H(+). It functions in the pathway quinol/quinone metabolism; menaquinone biosynthesis; menaquinol from 1,4-dihydroxy-2-naphthoate: step 2/2. Its pathway is cofactor biosynthesis; ubiquinone biosynthesis. Its function is as follows. Methyltransferase required for the conversion of demethylmenaquinol (DMKH2) to menaquinol (MKH2) and the conversion of 2-polyprenyl-6-methoxy-1,4-benzoquinol (DDMQH2) to 2-polyprenyl-3-methyl-6-methoxy-1,4-benzoquinol (DMQH2). This Rhizobium rhizogenes (strain K84 / ATCC BAA-868) (Agrobacterium radiobacter) protein is Ubiquinone/menaquinone biosynthesis C-methyltransferase UbiE.